The following is a 373-amino-acid chain: Mitochondrial fission regulator 2 (373 aa).

The residue at position 136 (Ser-136) is a Phosphoserine. Positions 151 to 179 form a coiled coil; it reads VSEAAIKKIAALEDELTSLRAQIAAIVAM. Disordered regions lie at residues 189-331 and 346-373; these read GFIS…WDPV and DDSFDSENRSWQGSPFSSPETSRNGSRF. A compositionally biased stretch (pro residues) spans 224–239; sequence SPPPLPPPPPPLPPPQ. Composition is skewed to basic and acidic residues over residues 275-287 and 297-310; these read KKTDGSHHSESQR and VLKDMNKVKLRPVE. Ser-312 and Ser-348 each carry phosphoserine. The span at 354 to 373 shows a compositional bias: polar residues; sequence RSWQGSPFSSPETSRNGSRF.

The protein belongs to the MTFR1 family.

The protein resides in the mitochondrion. May play a role in mitochondrial aerobic respiration essentially in the testis. Can also promote mitochondrial fission. This Rattus norvegicus (Rat) protein is Mitochondrial fission regulator 2 (Mtfr2).